A 515-amino-acid chain; its full sequence is Maturase K (515 aa).

This sequence belongs to the intron maturase 2 family. MatK subfamily.

Its subcellular location is the plastid. It localises to the chloroplast. Usually encoded in the trnK tRNA gene intron. Probably assists in splicing its own and other chloroplast group II introns. The polypeptide is Maturase K (Helonias bullata (Swamp pink)).